Here is a 471-residue protein sequence, read N- to C-terminus: 3-isopropylmalate dehydratase large subunit (471 aa).

C347, C407, and C410 together coordinate [4Fe-4S] cluster. The tract at residues 417 to 443 (TLQPGERSASTSNRNFEGRQGKGGRTH) is disordered.

The protein belongs to the aconitase/IPM isomerase family. LeuC type 1 subfamily. Heterodimer of LeuC and LeuD. [4Fe-4S] cluster is required as a cofactor.

The enzyme catalyses (2R,3S)-3-isopropylmalate = (2S)-2-isopropylmalate. Its pathway is amino-acid biosynthesis; L-leucine biosynthesis; L-leucine from 3-methyl-2-oxobutanoate: step 2/4. Functionally, catalyzes the isomerization between 2-isopropylmalate and 3-isopropylmalate, via the formation of 2-isopropylmaleate. The chain is 3-isopropylmalate dehydratase large subunit from Nocardioides sp. (strain ATCC BAA-499 / JS614).